Reading from the N-terminus, the 166-residue chain is MKITKLPSYRQTALIIFAGCVGLILAALYMQEVLGLHPCPLCITQRIFIIGVGLISLIAAIHNPAALGRKVYGCLATLSGVIGAGVSARHVWLQNLPEDQVPACGPDLAYMFDAFPLLDALKLLFAGDGNCADVVASFLGLSIPGWTFVAFVGLIAISVWQGLRKA.

Residues 1–12 (MKITKLPSYRQT) are Cytoplasmic-facing. A helical membrane pass occupies residues 13 to 29 (ALIIFAGCVGLILAALY). Over 30–47 (MQEVLGLHPCPLCITQRI) the chain is Periplasmic. Cysteines 39 and 42 form a disulfide. Residues 48 to 64 (FIIGVGLISLIAAIHNP) form a helical membrane-spanning segment. The Cytoplasmic portion of the chain corresponds to 65–70 (AALGRK). A helical transmembrane segment spans residues 71–88 (VYGCLATLSGVIGAGVSA). The Periplasmic portion of the chain corresponds to 89–145 (RHVWLQNLPEDQVPACGPDLAYMFDAFPLLDALKLLFAGDGNCADVVASFLGLSIPG). A disulfide bond links cysteine 104 and cysteine 131. A helical transmembrane segment spans residues 146-164 (WTFVAFVGLIAISVWQGLR). At 165–166 (KA) the chain is on the cytoplasmic side.

The protein belongs to the DsbB family.

Its subcellular location is the cell inner membrane. In terms of biological role, required for disulfide bond formation in some periplasmic proteins. Acts by oxidizing the DsbA protein. This Saccharophagus degradans (strain 2-40 / ATCC 43961 / DSM 17024) protein is Disulfide bond formation protein B.